Reading from the N-terminus, the 452-residue chain is Transcription factor AP-2-delta (452 aa).

Phosphoserine; by PKA is present on serine 239. The H-S-H (helix-span-helix), dimerization stretch occupies residues 280-410 (RRKAANVTLL…VLSEMLNYLE (131 aa)). The segment at 416–452 (KNGGAADSGQGHANSEKAPLRKASEAAVKEGKTEKTD) is disordered. The span at 429–452 (NSEKAPLRKASEAAVKEGKTEKTD) shows a compositional bias: basic and acidic residues.

Belongs to the AP-2 family. As to quaternary structure, binds DNA as a dimer. Can form homodimers or heterodimers with other AP-2 family members. As to expression, expressed in both embryonic and newborn brain.

It is found in the nucleus. Its function is as follows. Sequence-specific DNA-binding protein that interacts with inducible viral and cellular enhancer elements to regulate transcription of selected genes. AP-2 factors bind to the consensus sequence 5'-GCCNNNGGC-3' and activate genes involved in a large spectrum of important biological functions including proper eye, face, body wall, limb and neural tube development. They also suppress a number of genes including MCAM/MUC18, C/EBP alpha and MYC. This Mus musculus (Mouse) protein is Transcription factor AP-2-delta (Tfap2d).